Reading from the N-terminus, the 892-residue chain is Ataxin-7 (892 aa).

Positions 1–15 are enriched in basic and acidic residues; the sequence is MSERAADDVRGEPRR. Disordered regions lie at residues 1-74 and 195-247; these read MSER…SAAA and SKGG…SRVP. A compositionally biased stretch (low complexity) spans 16–38; that stretch reads AAAAAGGAAAAAARQQQQQQQQQ. The segment covering 39-55 has biased composition (pro residues); it reads QPPPPQPQRQQHPPPPP. Over residues 195-222 the composition is skewed to low complexity; that stretch reads SKGGSASGSNRSSSGGVLSASSSSSKLL. K257 is covalently cross-linked (Glycyl lysine isopeptide (Lys-Gly) (interchain with G-Cter in SUMO); alternate). Residue K257 forms a Glycyl lysine isopeptide (Lys-Gly) (interchain with G-Cter in SUMO2); alternate linkage. Disordered regions lie at residues 298–328, 389–505, 616–730, and 818–892; these read PTLPSPGQILNGKGLPAPPTLEKKPEDNSNN, HKNK…ESVE, KSVP…SSHS, and SHGS…KARP. Basic and acidic residues-rich tracts occupy residues 318–327 and 389–403; these read LEKKPEDNSN and HKNKTREKELIRHPD. The region spanning 334-401 is the SCA7 domain; it reads KRLSEREFDP…KTREKELIRH (68 aa). Pro residues-rich tracts occupy residues 405–419, 448–458, and 468–483; these read QQPPQPLRDPHPAPP, HTPSLPRPPGC, and IDPPPVHESPHPPLPA. The span at 493–502 shows a compositional bias: acidic residues; it reads EEGEGDDKEE. Over residues 616-629 the composition is skewed to polar residues; sequence KSVPAHGTTLNAQP. The span at 640–669 shows a compositional bias: low complexity; it reads SMQSRQVSSSSSSPSTPSGLSSVPSSPMSR. Basic residues predominate over residues 670 to 680; the sequence is KPQKLKSSKSL. Over residues 685-695 the composition is skewed to polar residues; that stretch reads SSGNSTNCQNA. 2 stretches are compositionally biased toward low complexity: residues 716–730 and 840–851; these read HSSSSSSSSSSSSHS and SPSSSSINNSSS.

It belongs to the ataxin-7 family. In terms of assembly, component of the SAGA transcription coactivator-HAT complex, at least composed of SUPT3H, GCN5L2, TAF5L, TAF6L, SUPT7L, TADA3L, TAD1L, TAF10, TAF12, TRRAP, TAF9 and ATXN7. The STAGA core complex is associated with a subcomplex required for histone deubiquitination composed of ATXN7L3, ENY2 and USP22. Interacts with SORBS1, PSMC1 and CRX. Interacts with TRRAP, GCN5L2 and TAF10. Interacts with alpha tubulin. Proteolytically cleaved by caspase-7 (CASP7). The cleavage may be involved in SCA7 degeneration: the isoform fragments may exert distinct toxic influences that could contribute to selective neurodegeneration. Post-translationally, sumoylation decreases the aggregation propensity and cellular toxicity of forms with an expanded poly-Gln region but has no effect on subcellular location or interaction with components of the STAGA complex. Isoform a is expressed in CNS, but is expressed predominantly in the peripherical tissues. As to expression, isoform b is expressed in CNS. Also highly expressed in the frontal lobe, skeletal muscle and spinal cord and is expressed at a lower level in the lung, lymphoblast and intestine.

The protein localises to the nucleus. The protein resides in the nucleolus. It localises to the nucleus matrix. Its subcellular location is the cytoplasm. It is found in the cytoskeleton. In terms of biological role, acts as a component of the SAGA (aka STAGA) transcription coactivator-HAT complex. Mediates the interaction of SAGA complex with the CRX and is involved in CRX-dependent gene activation. Probably involved in tethering the deubiquitination module within the SAGA complex. Necessary for microtubule cytoskeleton stabilization. Involved in neurodegeneration. This chain is Ataxin-7 (ATXN7), found in Homo sapiens (Human).